The primary structure comprises 201 residues: ATP-dependent Clp protease proteolytic subunit (201 aa).

The active-site Nucleophile is the S98. H123 is an active-site residue.

Belongs to the peptidase S14 family. Fourteen ClpP subunits assemble into 2 heptameric rings which stack back to back to give a disk-like structure with a central cavity, resembling the structure of eukaryotic proteasomes.

The protein resides in the cytoplasm. It catalyses the reaction Hydrolysis of proteins to small peptides in the presence of ATP and magnesium. alpha-casein is the usual test substrate. In the absence of ATP, only oligopeptides shorter than five residues are hydrolyzed (such as succinyl-Leu-Tyr-|-NHMec, and Leu-Tyr-Leu-|-Tyr-Trp, in which cleavage of the -Tyr-|-Leu- and -Tyr-|-Trp bonds also occurs).. In terms of biological role, cleaves peptides in various proteins in a process that requires ATP hydrolysis. Has a chymotrypsin-like activity. Plays a major role in the degradation of misfolded proteins. In Rickettsia peacockii (strain Rustic), this protein is ATP-dependent Clp protease proteolytic subunit.